A 209-amino-acid chain; its full sequence is Uridine kinase (209 aa).

ATP is bound at residue 12–19 (GGSGSGKT).

This sequence belongs to the uridine kinase family.

The protein resides in the cytoplasm. The enzyme catalyses uridine + ATP = UMP + ADP + H(+). It catalyses the reaction cytidine + ATP = CMP + ADP + H(+). It participates in pyrimidine metabolism; CTP biosynthesis via salvage pathway; CTP from cytidine: step 1/3. It functions in the pathway pyrimidine metabolism; UMP biosynthesis via salvage pathway; UMP from uridine: step 1/1. The sequence is that of Uridine kinase from Streptococcus mutans serotype c (strain ATCC 700610 / UA159).